Consider the following 100-residue polypeptide: Large ribosomal subunit protein bL28 (100 aa).

The protein belongs to the bacterial ribosomal protein bL28 family.

The chain is Large ribosomal subunit protein bL28 from Ehrlichia ruminantium (strain Welgevonden).